The chain runs to 464 residues: 3-isopropylmalate dehydratase large subunit (464 aa).

Cysteine 337, cysteine 397, and cysteine 400 together coordinate [4Fe-4S] cluster.

It belongs to the aconitase/IPM isomerase family. LeuC type 1 subfamily. In terms of assembly, heterodimer of LeuC and LeuD. It depends on [4Fe-4S] cluster as a cofactor.

The catalysed reaction is (2R,3S)-3-isopropylmalate = (2S)-2-isopropylmalate. Its pathway is amino-acid biosynthesis; L-leucine biosynthesis; L-leucine from 3-methyl-2-oxobutanoate: step 2/4. Catalyzes the isomerization between 2-isopropylmalate and 3-isopropylmalate, via the formation of 2-isopropylmaleate. This is 3-isopropylmalate dehydratase large subunit from Bacillus mycoides (strain KBAB4) (Bacillus weihenstephanensis).